A 194-amino-acid chain; its full sequence is Fibroblast growth factor 7 (194 aa).

The N-terminal stretch at 1–31 (MRKWILTWILPTLLYRSCFHIICLVGTISLA) is a signal peptide. Asn45 carries an N-linked (GlcNAc...) asparagine glycan.

This sequence belongs to the heparin-binding growth factors family. Interacts with FGFBP1. Interacts with FGFR2. Affinity between fibroblast growth factors (FGFs) and their receptors is increased by heparan sulfate glycosaminoglycans that function as coreceptors.

The protein localises to the secreted. Its function is as follows. Plays an important role in the regulation of embryonic development, cell proliferation and cell differentiation. Required for normal branching morphogenesis. Growth factor active on keratinocytes. Possible major paracrine effector of normal epithelial cell proliferation. In Canis lupus familiaris (Dog), this protein is Fibroblast growth factor 7 (FGF7).